A 219-amino-acid chain; its full sequence is 2-C-methyl-D-erythritol 4-phosphate cytidylyltransferase (219 aa).

The protein belongs to the IspD/TarI cytidylyltransferase family. IspD subfamily.

The catalysed reaction is 2-C-methyl-D-erythritol 4-phosphate + CTP + H(+) = 4-CDP-2-C-methyl-D-erythritol + diphosphate. It participates in isoprenoid biosynthesis; isopentenyl diphosphate biosynthesis via DXP pathway; isopentenyl diphosphate from 1-deoxy-D-xylulose 5-phosphate: step 2/6. Catalyzes the formation of 4-diphosphocytidyl-2-C-methyl-D-erythritol from CTP and 2-C-methyl-D-erythritol 4-phosphate (MEP). The sequence is that of 2-C-methyl-D-erythritol 4-phosphate cytidylyltransferase from Bacteroides fragilis (strain ATCC 25285 / DSM 2151 / CCUG 4856 / JCM 11019 / LMG 10263 / NCTC 9343 / Onslow / VPI 2553 / EN-2).